Here is a 114-residue protein sequence, read N- to C-terminus: MMAIFISIVLVVSFVLFNRVQAKKSIYNYIARQGIQESQLKYIDFHKDFKMGGYWLAVYVEGENPDIYYEYSYQDKKVNFQAYFNSEKAIKKKMWGGSGLTEIEMKKLKYPPLQ.

Possibly involved in pGI2 replication mechanism. This is an uncharacterized protein from Bacillus thuringiensis.